The primary structure comprises 306 residues: MELKDYYAIMGVKPTDDLKTIKTAYRRLARKYHPDVSKEPDAEARFKEVAEAWEVLSDEQRRAEYDQLWQHRNDPQFNRQFQQHEGQPYNAEDFDDIFSSIFGQHGRHSHHRHAARGHDIEIEVAVFLEETLEEHQRTISYSVPVYNAFGLVEREIPRTLNVKIPAGVSNGQRIRLKGQGTPGENGGPNGDLWLVIHIAPHPLFDIVNQDLEVVLPLAPWEAALGAKVSVPTLKERILLTIPPGSQAGQRLRIKGKGLASKKHTGDLYAVIKIVMPPKPDEKTAALWQQLADAQSSFDPRQQWGKA.

Residues 5–69 (DYYAIMGVKP…QRRAEYDQLW (65 aa)) form the J domain.

The protein localises to the cytoplasm. The protein resides in the nucleoid. In terms of biological role, DNA-binding protein that preferentially recognizes a curved DNA sequence. It is probably a functional analog of DnaJ; displays overlapping activities with DnaJ, but functions under different conditions, probably acting as a molecular chaperone in an adaptive response to environmental stresses other than heat shock. Lacks autonomous chaperone activity; binds native substrates and targets them for recognition by DnaK. Its activity is inhibited by the binding of CbpM. The protein is Curved DNA-binding protein of Salmonella arizonae (strain ATCC BAA-731 / CDC346-86 / RSK2980).